We begin with the raw amino-acid sequence, 436 residues long: Indole-3-acetyl-aspartic acid hydrolase (436 aa).

Belongs to the peptidase M20 family. Monomer.

The catalysed reaction is (indol-3-yl)acetyl-L-aspartate + H2O = (indol-3-yl)acetate + L-aspartate. Functionally, hydrolyzes indole-3-acetyl-aspartate (IAA-Asp) to indole-3-acetic acid (IAA). Shows an exclusively high substrate specificity for IAA-Asp. The sequence is that of Indole-3-acetyl-aspartic acid hydrolase from Enterobacter agglomerans (Erwinia herbicola).